Consider the following 345-residue polypeptide: Phosphoribosylformylglycinamidine cyclo-ligase (345 aa).

This sequence belongs to the AIR synthase family.

It localises to the cytoplasm. The catalysed reaction is 2-formamido-N(1)-(5-O-phospho-beta-D-ribosyl)acetamidine + ATP = 5-amino-1-(5-phospho-beta-D-ribosyl)imidazole + ADP + phosphate + H(+). It participates in purine metabolism; IMP biosynthesis via de novo pathway; 5-amino-1-(5-phospho-D-ribosyl)imidazole from N(2)-formyl-N(1)-(5-phospho-D-ribosyl)glycinamide: step 2/2. The protein is Phosphoribosylformylglycinamidine cyclo-ligase of Sodalis glossinidius (strain morsitans).